The chain runs to 512 residues: FACT complex subunit pob3 (512 aa).

Positions 460 to 504 (LDDEDEEGDEEMEEALSEDEDFQAESESDVAEEYDENAESSDEEG) are enriched in acidic residues. The disordered stretch occupies residues 460–512 (LDDEDEEGDEEMEEALSEDEDFQAESESDVAEEYDENAESSDEEGASGAEGSE).

It belongs to the SSRP1 family. Forms a stable heterodimer with spt16. The spt16-pob3 dimer weakly associates with multiple molecules of nhp6 to form the FACT complex. Interacts with abo1.

Its subcellular location is the nucleus. The protein localises to the chromosome. Component of the FACT complex, a general chromatin factor that acts to reorganize nucleosomes. The FACT complex is involved in multiple processes that require DNA as a template such as mRNA elongation, DNA replication and DNA repair. During transcription elongation the FACT complex acts as a histone chaperone that both destabilizes and restores nucleosomal structure. It facilitates the passage of RNA polymerase II and transcription by promoting the dissociation of one histone H2A-H2B dimer from the nucleosome, then subsequently promotes the reestablishment of the nucleosome following the passage of RNA polymerase II. The protein is FACT complex subunit pob3 of Schizosaccharomyces pombe (strain 972 / ATCC 24843) (Fission yeast).